The chain runs to 89 residues: Large ribosomal subunit protein bL27 (89 aa).

Residues 1–20 (MAHKKAGGSSRNGRDSIGRR) form a disordered region.

It belongs to the bacterial ribosomal protein bL27 family.

The protein is Large ribosomal subunit protein bL27 of Ruegeria pomeroyi (strain ATCC 700808 / DSM 15171 / DSS-3) (Silicibacter pomeroyi).